The sequence spans 435 residues: T-box transcription factor T (435 aa).

The segment at residues 51 to 219 is a DNA-binding region (T-box); sequence LWLRFKELTN…YNPFAKAFLD (169 aa). Residues 279–308 are disordered; the sequence is YPTLRSHRSSPYPSPYAHRNNSPTYSDNSP. Polar residues predominate over residues 297–308; it reads RNNSPTYSDNSP.

As to quaternary structure, monomer. Detected in testis, but not in other, normal tissues. Detected in lung tumors (at protein level).

It localises to the nucleus. Involved in the transcriptional regulation of genes required for mesoderm formation and differentiation. Binds to a palindromic T site 5'-TTCACACCTAGGTGTGAA-3' DNA sequence and activates gene transcription when bound to such a site. The protein is T-box transcription factor T of Homo sapiens (Human).